The sequence spans 169 residues: Disulfide bond formation protein B (169 aa).

Residues 1 to 14 (MMRFLNHCSQGRSA) are Cytoplasmic-facing. Residues 15-31 (WLLMILTALILESSALY) form a helical membrane-spanning segment. Residues 32 to 49 (FQHVMKLQPCVMCIYERV) lie on the Periplasmic side of the membrane. An intrachain disulfide couples C41 to C44. The chain crosses the membrane as a helical span at residues 50-65 (ALFGVLSAGILGVIAP). At 66–71 (KTPLRW) the chain is on the cytoplasmic side. Residues 72–89 (LAIILWIYSAWGGLQLAW) traverse the membrane as a helical segment. Residues 90–144 (QHTMMQLHPSPFNTCDFFVNFPSWLALNQWLPSVFEATGDCSVRQWQFLTLEMPQ) lie on the Periplasmic side of the membrane. The cysteines at positions 104 and 130 are disulfide-linked. The helical transmembrane segment at 145–163 (WLVGIFAAYLVVAALVLIS) threads the bilayer. The Cytoplasmic segment spans residues 164-169 (QFFSRK).

Belongs to the DsbB family.

Its subcellular location is the cell inner membrane. Its function is as follows. Required for disulfide bond formation in some periplasmic proteins. Acts by oxidizing the DsbA protein. The sequence is that of Disulfide bond formation protein B from Photorhabdus laumondii subsp. laumondii (strain DSM 15139 / CIP 105565 / TT01) (Photorhabdus luminescens subsp. laumondii).